The chain runs to 222 residues: MTENRQLGALLAACHWIGEKGWCPATGGNMSLRLDLAHCLITESGKDKGSLAAEDFLLVETANNHVPSGRTPSAETGLHTLLYRLYPEIQAVLHTHSVNATVLSRVERSNALVLQGYEMQKSLSGQRSHLDAVVIPIFDNDQDIPALAQRVAAYADNRPLQYGFLVRGHGLYCWGNSVVEARRHLEGLEFLFQCELQRRLFDVNSNVDVKPNVDVNPNVEAK.

Residues His94 and His96 each coordinate Zn(2+).

It belongs to the aldolase class II family. MtnB subfamily. Requires Zn(2+) as cofactor.

It carries out the reaction 5-(methylsulfanyl)-D-ribulose 1-phosphate = 5-methylsulfanyl-2,3-dioxopentyl phosphate + H2O. It functions in the pathway amino-acid biosynthesis; L-methionine biosynthesis via salvage pathway; L-methionine from S-methyl-5-thio-alpha-D-ribose 1-phosphate: step 2/6. Functionally, catalyzes the dehydration of methylthioribulose-1-phosphate (MTRu-1-P) into 2,3-diketo-5-methylthiopentyl-1-phosphate (DK-MTP-1-P). This chain is Methylthioribulose-1-phosphate dehydratase, found in Yersinia pseudotuberculosis serotype O:1b (strain IP 31758).